The primary structure comprises 182 residues: Small ribosomal subunit protein uS4c (182 aa).

The S4 RNA-binding domain occupies 82–143; sequence MRLDNILFRL…KQRSKALIQN (62 aa).

Belongs to the universal ribosomal protein uS4 family. In terms of assembly, part of the 30S ribosomal subunit. Contacts protein S5. The interaction surface between S4 and S5 is involved in control of translational fidelity.

The protein localises to the plastid. It localises to the chloroplast. Functionally, one of the primary rRNA binding proteins, it binds directly to 16S rRNA where it nucleates assembly of the body of the 30S subunit. In terms of biological role, with S5 and S12 plays an important role in translational accuracy. The sequence is that of Small ribosomal subunit protein uS4c (rps4) from Isophysis tasmanica.